Reading from the N-terminus, the 517-residue chain is Maturase K (517 aa).

The protein belongs to the intron maturase 2 family. MatK subfamily.

The protein localises to the plastid. It localises to the chloroplast. Functionally, usually encoded in the trnK tRNA gene intron. Probably assists in splicing its own and other chloroplast group II introns. In Acer pseudoplatanus (Sycamore maple), this protein is Maturase K.